The sequence spans 855 residues: DNA replication helicase (855 aa).

78–85 (GNAGSGKS) contributes to the ATP binding site.

This sequence belongs to the herpesviridae helicase family. In terms of assembly, associates with the primase and the primase-associated factor to form the helicase-primase complex.

It localises to the host nucleus. Component of the helicase/primase complex. Unwinds the DNA at the replication forks and generates single-stranded DNA for both leading and lagging strand synthesis. The primase synthesizes short RNA primers on the lagging strand that the polymerase elongates using dNTPs. Possesses helicase-like motifs and therefore may act as the helicase subunit of the complex. The chain is DNA replication helicase from Amazona oratrix (yellow-headed parrot).